Reading from the N-terminus, the 716-residue chain is Myogenesis-regulating glycosidase (716 aa).

Residues 1–11 show a composition bias toward polar residues; sequence MSQNLQETSQA. A disordered region spans residues 1–26; sequence MSQNLQETSQAYPRHRPGSHAGPKSL. The Cytoplasmic portion of the chain corresponds to 1-55; that stretch reads MSQNLQETSQAYPRHRPGSHAGPKSLKVTPRATMYTFLPDNFSPAKPKPTKELRP. The chain crosses the membrane as a helical; Signal-anchor for type II membrane protein span at residues 56 to 76; sequence LLCSAVLGLLLVLAAVVAWCY. The Extracellular segment spans residues 77 to 716; sequence YSASLRKAER…DEVAYFTWAS (640 aa). 3 N-linked (GlcNAc...) asparagine glycosylation sites follow: Asn239, Asn249, and Asn455. Catalysis depends on residues Asp462 and Glu465. The Proton donor role is filled by Asp527.

It belongs to the glycosyl hydrolase 31 family. In terms of assembly, interacts with IGF2; this interaction is required for IGF2 secretion. As to expression, expressed in brain, liver, spleen, skeletal muscle, heart, lung and kidney. High expression is observed in the cerebellum, specifically in astrocytes. Highly expressed in skeletal muscle (at protein level).

It is found in the nucleus membrane. The protein localises to the endoplasmic reticulum membrane. In terms of biological role, putative glycosidase. Promotes myogenesis by activating AKT signaling through the maturation and secretion of IGF2. This Mus musculus (Mouse) protein is Myogenesis-regulating glycosidase (Myorg).